The sequence spans 216 residues: NADH-quinone oxidoreductase subunit C (216 aa).

It belongs to the complex I 30 kDa subunit family. NDH-1 is composed of 14 different subunits. Subunits NuoB, C, D, E, F, and G constitute the peripheral sector of the complex.

The protein localises to the cell inner membrane. The enzyme catalyses a quinone + NADH + 5 H(+)(in) = a quinol + NAD(+) + 4 H(+)(out). Its function is as follows. NDH-1 shuttles electrons from NADH, via FMN and iron-sulfur (Fe-S) centers, to quinones in the respiratory chain. The immediate electron acceptor for the enzyme in this species is believed to be ubiquinone. Couples the redox reaction to proton translocation (for every two electrons transferred, four hydrogen ions are translocated across the cytoplasmic membrane), and thus conserves the redox energy in a proton gradient. The protein is NADH-quinone oxidoreductase subunit C of Francisella tularensis subsp. tularensis (strain FSC 198).